The primary structure comprises 119 residues: Large ribosomal subunit protein bL19 (119 aa).

This sequence belongs to the bacterial ribosomal protein bL19 family.

Functionally, this protein is located at the 30S-50S ribosomal subunit interface and may play a role in the structure and function of the aminoacyl-tRNA binding site. This Arthrobacter sp. (strain FB24) protein is Large ribosomal subunit protein bL19.